The following is a 283-amino-acid chain: 4-hydroxy-3-methylbut-2-enyl diphosphate reductase (283 aa).

Residue Cys12 participates in [4Fe-4S] cluster binding. (2E)-4-hydroxy-3-methylbut-2-enyl diphosphate-binding residues include His40 and His72. Residues His40 and His72 each contribute to the dimethylallyl diphosphate site. 2 residues coordinate isopentenyl diphosphate: His40 and His72. Cys94 is a binding site for [4Fe-4S] cluster. Position 122 (His122) interacts with (2E)-4-hydroxy-3-methylbut-2-enyl diphosphate. His122 serves as a coordination point for dimethylallyl diphosphate. His122 serves as a coordination point for isopentenyl diphosphate. The active-site Proton donor is Glu124. Residue Thr160 coordinates (2E)-4-hydroxy-3-methylbut-2-enyl diphosphate. A [4Fe-4S] cluster-binding site is contributed by Cys188. Residues Ser216, Asn218, and Ser259 each coordinate (2E)-4-hydroxy-3-methylbut-2-enyl diphosphate. Dimethylallyl diphosphate contacts are provided by Ser216, Asn218, and Ser259. Residues Ser216, Asn218, and Ser259 each contribute to the isopentenyl diphosphate site.

The protein belongs to the IspH family. [4Fe-4S] cluster serves as cofactor.

It catalyses the reaction isopentenyl diphosphate + 2 oxidized [2Fe-2S]-[ferredoxin] + H2O = (2E)-4-hydroxy-3-methylbut-2-enyl diphosphate + 2 reduced [2Fe-2S]-[ferredoxin] + 2 H(+). It carries out the reaction dimethylallyl diphosphate + 2 oxidized [2Fe-2S]-[ferredoxin] + H2O = (2E)-4-hydroxy-3-methylbut-2-enyl diphosphate + 2 reduced [2Fe-2S]-[ferredoxin] + 2 H(+). Its pathway is isoprenoid biosynthesis; dimethylallyl diphosphate biosynthesis; dimethylallyl diphosphate from (2E)-4-hydroxy-3-methylbutenyl diphosphate: step 1/1. It functions in the pathway isoprenoid biosynthesis; isopentenyl diphosphate biosynthesis via DXP pathway; isopentenyl diphosphate from 1-deoxy-D-xylulose 5-phosphate: step 6/6. Its function is as follows. Catalyzes the conversion of 1-hydroxy-2-methyl-2-(E)-butenyl 4-diphosphate (HMBPP) into a mixture of isopentenyl diphosphate (IPP) and dimethylallyl diphosphate (DMAPP). Acts in the terminal step of the DOXP/MEP pathway for isoprenoid precursor biosynthesis. The chain is 4-hydroxy-3-methylbut-2-enyl diphosphate reductase from Dictyoglomus thermophilum (strain ATCC 35947 / DSM 3960 / H-6-12).